The primary structure comprises 370 residues: tRNA N6-adenosine threonylcarbamoyltransferase (370 aa).

Residues His122 and His126 each contribute to the Fe cation site. Substrate contacts are provided by residues 153–157 (LLSGG), Asp186, Gly199, and Asn298. Asp326 lines the Fe cation pocket.

Belongs to the KAE1 / TsaD family. It depends on Fe(2+) as a cofactor.

Its subcellular location is the cytoplasm. The catalysed reaction is L-threonylcarbamoyladenylate + adenosine(37) in tRNA = N(6)-L-threonylcarbamoyladenosine(37) in tRNA + AMP + H(+). Its function is as follows. Required for the formation of a threonylcarbamoyl group on adenosine at position 37 (t(6)A37) in tRNAs that read codons beginning with adenine. Is involved in the transfer of the threonylcarbamoyl moiety of threonylcarbamoyl-AMP (TC-AMP) to the N6 group of A37, together with TsaE and TsaB. TsaD likely plays a direct catalytic role in this reaction. The sequence is that of tRNA N6-adenosine threonylcarbamoyltransferase from Granulibacter bethesdensis (strain ATCC BAA-1260 / CGDNIH1).